The chain runs to 570 residues: piRNA biogenesis protein EXD1 (570 aa).

The region spanning 135 to 307 (YTVIDQFQQK…LPPSLLKILA (173 aa)) is the 3'-5' exonuclease domain. Composition is skewed to basic and acidic residues over residues 433 to 442 (DEKFLDKESK) and 453 to 465 (PRKE…DSKN). The tract at residues 433–485 (DEKFLDKESKQTTAKSQIVPPRKEGEAHKDSKNKPGCWESAGPEDPRAQKAHA) is disordered.

This sequence belongs to the EXD1 family. As to quaternary structure, homodimer. Component of the PET complex, at least composed of EXD1, PIWIL2, TDRD12 and piRNAs.

It localises to the cytoplasm. Functionally, RNA-binding component of the PET complex, a multiprotein complex required for the processing of piRNAs during spermatogenesis. The piRNA metabolic process mediates the repression of transposable elements during meiosis by forming complexes composed of piRNAs and Piwi proteins and governs the methylation and subsequent repression of transposable elements, preventing their mobilization, which is essential for the germline integrity. The PET complex is required during the secondary piRNAs metabolic process for the PIWIL2 slicing-triggered loading of PIWIL4 piRNAs. In the PET complex, EXD1 probably acts as an RNA adapter. EXD1 is an inactive exonuclease. The polypeptide is piRNA biogenesis protein EXD1 (Exd1) (Mus musculus (Mouse)).